Consider the following 299-residue polypeptide: MTTTNRLRIALQKKGRLSKDCNELLKQCGVKINWNEQRLIAYAENMPIEILRVRDDDIPGLVFEGVVDLGIIGENVLEEEELGRLARGEKIEYKKLRTLDFGGCRLSLAIDRDRTYNGVQDFVNSRIATSYPNLLKRYMNEKGVAFKSTLLNGSVEVAPSAGLADAICDLVSSGATLEANGLKEVEVIYQSKACLIQRAEPLSAEKQALVDRLLTRIQGVQQAAESKYIMLHAPKDKLKEITALLPGVENPTILPLANDSARVAMHVVSQENLFWETMEQLKEMGASSVLVLPIEKMLA.

It belongs to the ATP phosphoribosyltransferase family. Long subfamily. Requires Mg(2+) as cofactor.

It is found in the cytoplasm. The catalysed reaction is 1-(5-phospho-beta-D-ribosyl)-ATP + diphosphate = 5-phospho-alpha-D-ribose 1-diphosphate + ATP. The protein operates within amino-acid biosynthesis; L-histidine biosynthesis; L-histidine from 5-phospho-alpha-D-ribose 1-diphosphate: step 1/9. Feedback inhibited by histidine. In terms of biological role, catalyzes the condensation of ATP and 5-phosphoribose 1-diphosphate to form N'-(5'-phosphoribosyl)-ATP (PR-ATP). Has a crucial role in the pathway because the rate of histidine biosynthesis seems to be controlled primarily by regulation of HisG enzymatic activity. This is ATP phosphoribosyltransferase from Actinobacillus pleuropneumoniae serotype 7 (strain AP76).